The following is a 351-amino-acid chain: Dihydroorotate dehydrogenase (quinone) (351 aa).

FMN is bound by residues 61 to 65 (AGLDK) and Thr85. Lys65 is a substrate binding site. A substrate-binding site is contributed by 110-114 (NRMGF). 2 residues coordinate FMN: Asn139 and Asn172. Asn172 lines the substrate pocket. Ser175 (nucleophile) is an active-site residue. Residue Asn177 coordinates substrate. Residues Lys217 and Thr245 each coordinate FMN. 246 to 247 (NT) contributes to the substrate binding site. FMN-binding positions include Gly268, Gly297, and 318–319 (YS).

Belongs to the dihydroorotate dehydrogenase family. Type 2 subfamily. Monomer. It depends on FMN as a cofactor.

The protein resides in the cell membrane. The catalysed reaction is (S)-dihydroorotate + a quinone = orotate + a quinol. It functions in the pathway pyrimidine metabolism; UMP biosynthesis via de novo pathway; orotate from (S)-dihydroorotate (quinone route): step 1/1. Functionally, catalyzes the conversion of dihydroorotate to orotate with quinone as electron acceptor. In Xanthomonas euvesicatoria pv. vesicatoria (strain 85-10) (Xanthomonas campestris pv. vesicatoria), this protein is Dihydroorotate dehydrogenase (quinone).